Reading from the N-terminus, the 208-residue chain is High frequency lysogenization protein HflD homolog (208 aa).

The protein belongs to the HflD family.

It localises to the cytoplasm. The protein localises to the cell inner membrane. The polypeptide is High frequency lysogenization protein HflD homolog (Photorhabdus laumondii subsp. laumondii (strain DSM 15139 / CIP 105565 / TT01) (Photorhabdus luminescens subsp. laumondii)).